A 175-amino-acid chain; its full sequence is Ribosome maturation factor RimM (175 aa).

Residues 93 to 167 (DDEFYYSDLI…YIIITLPEVI (75 aa)) enclose the PRC barrel domain.

Belongs to the RimM family. As to quaternary structure, binds ribosomal protein uS19.

It localises to the cytoplasm. Functionally, an accessory protein needed during the final step in the assembly of 30S ribosomal subunit, possibly for assembly of the head region. Essential for efficient processing of 16S rRNA. May be needed both before and after RbfA during the maturation of 16S rRNA. It has affinity for free ribosomal 30S subunits but not for 70S ribosomes. The chain is Ribosome maturation factor RimM from Ehrlichia chaffeensis (strain ATCC CRL-10679 / Arkansas).